We begin with the raw amino-acid sequence, 317 residues long: MVRSGKGIQNKNATEVTEFILLGLSDNPDLQGVLFALFLIIYTMTLVGNLGMMALIKIDRSLHTPMYFFLSSLSFVDASYSSSVTPKMLVNLMAEDKSISFNGCATQFFFFGSFLGTECFLLAMMAYDRYAAIWNPLLYPVLMSGRICFMLVSTSFLAGFGNAAIHTGMTFRLSFCGSNKINHFYCDTPPLLKLSCSDTHINGIVIMAFSSFNVISCVLIVLISYLCILIAILKMPSAEGRHKAFSTCASHLMAVTIFFGTILFMYLRPTSSYSMEQDKVVSVFYTVVIPMLNPLIYSLKNKDVKKAVKKILHNYVV.

Residues 1–32 lie on the Extracellular side of the membrane; it reads MVRSGKGIQNKNATEVTEFILLGLSDNPDLQG. An N-linked (GlcNAc...) asparagine glycan is attached at Asn12. A helical membrane pass occupies residues 33–53; that stretch reads VLFALFLIIYTMTLVGNLGMM. Residues 54–61 lie on the Cytoplasmic side of the membrane; it reads ALIKIDRS. A helical transmembrane segment spans residues 62-82; that stretch reads LHTPMYFFLSSLSFVDASYSS. At 83 to 106 the chain is on the extracellular side; it reads SVTPKMLVNLMAEDKSISFNGCAT. Residues Cys104 and Cys196 are joined by a disulfide bond. The chain crosses the membrane as a helical span at residues 107–127; the sequence is QFFFFGSFLGTECFLLAMMAY. Residues 128–140 lie on the Cytoplasmic side of the membrane; that stretch reads DRYAAIWNPLLYP. A helical membrane pass occupies residues 141–161; that stretch reads VLMSGRICFMLVSTSFLAGFG. Residues 162-203 lie on the Extracellular side of the membrane; that stretch reads NAAIHTGMTFRLSFCGSNKINHFYCDTPPLLKLSCSDTHING. Residues 204-224 form a helical membrane-spanning segment; it reads IVIMAFSSFNVISCVLIVLIS. The Cytoplasmic segment spans residues 225 to 244; that stretch reads YLCILIAILKMPSAEGRHKA. The chain crosses the membrane as a helical span at residues 245–265; it reads FSTCASHLMAVTIFFGTILFM. The Extracellular segment spans residues 266–278; it reads YLRPTSSYSMEQD. The helical transmembrane segment at 279–299 threads the bilayer; the sequence is KVVSVFYTVVIPMLNPLIYSL. Over 300–317 the chain is Cytoplasmic; that stretch reads KNKDVKKAVKKILHNYVV.

This sequence belongs to the G-protein coupled receptor 1 family.

The protein localises to the cell membrane. Functionally, odorant receptor. This chain is Olfactory receptor 5AP2, found in Mus musculus (Mouse).